Reading from the N-terminus, the 343-residue chain is MTVQEIKGKKLVKGIAPNVEPEALLNDKRKVFLFGSPSYTNIGDQAIAYAEEKFIKNHFPYYEYIEIMDYATDEGIELVKEIIREDDIVCFTGGGNLGNLYLDIEEDRRKVFSAFKDYKSISLPQSVYFEDTEEGQKEKKKTQDAYHQNTNLTIAARETQTLDVVKETFNSNVIFTPDMVLSLDIVPRELERDGVLFILRADKEKVTDEDFISQMKQWAEKTTYTERTDTVLDTVDTIDYADREKHFMEMLDRIGSSKLVITDRLHAMIFSIITKTPCLVFGNSYGKAKHSYRDWLESLNFIEYTDKNDVEELERMIDRLLQAEPNDVDLSKDFQPLIDFFAS.

It belongs to the polysaccharide pyruvyl transferase family.

This is General stress protein 30 (yxaB) from Bacillus subtilis (strain 168).